Here is a 599-residue protein sequence, read N- to C-terminus: NADH-quinone oxidoreductase subunit C/D (599 aa).

Residues 1–189 (MTDLTTHDLA…DPFELTKQKE (189 aa)) are NADH dehydrogenase I subunit C. An NADH dehydrogenase I subunit D region spans residues 213–599 (DFMFLNLGPN…IDFVMSDVDR (387 aa)).

It in the N-terminal section; belongs to the complex I 30 kDa subunit family. This sequence in the C-terminal section; belongs to the complex I 49 kDa subunit family. In terms of assembly, NDH-1 is composed of 13 different subunits. Subunits NuoB, CD, E, F, and G constitute the peripheral sector of the complex.

The protein resides in the cell inner membrane. The enzyme catalyses a quinone + NADH + 5 H(+)(in) = a quinol + NAD(+) + 4 H(+)(out). NDH-1 shuttles electrons from NADH, via FMN and iron-sulfur (Fe-S) centers, to quinones in the respiratory chain. The immediate electron acceptor for the enzyme in this species is believed to be ubiquinone. Couples the redox reaction to proton translocation (for every two electrons transferred, four hydrogen ions are translocated across the cytoplasmic membrane), and thus conserves the redox energy in a proton gradient. The protein is NADH-quinone oxidoreductase subunit C/D of Pectobacterium atrosepticum (strain SCRI 1043 / ATCC BAA-672) (Erwinia carotovora subsp. atroseptica).